A 227-amino-acid chain; its full sequence is ATP-dependent dethiobiotin synthetase BioD (227 aa).

Position 13–18 (13–18 (DIGKTY)) interacts with ATP. Thr-17 serves as a coordination point for Mg(2+). Lys-38 is an active-site residue. A substrate-binding site is contributed by Ser-42. ATP-binding positions include Asp-55, 116–119 (EGSG), and 179–180 (NN). Asp-55 and Glu-116 together coordinate Mg(2+).

The protein belongs to the dethiobiotin synthetase family. In terms of assembly, homodimer. Mg(2+) serves as cofactor.

Its subcellular location is the cytoplasm. It catalyses the reaction (7R,8S)-7,8-diammoniononanoate + CO2 + ATP = (4R,5S)-dethiobiotin + ADP + phosphate + 3 H(+). It participates in cofactor biosynthesis; biotin biosynthesis; biotin from 7,8-diaminononanoate: step 1/2. In terms of biological role, catalyzes a mechanistically unusual reaction, the ATP-dependent insertion of CO2 between the N7 and N8 nitrogen atoms of 7,8-diaminopelargonic acid (DAPA, also called 7,8-diammoniononanoate) to form a ureido ring. In Clostridium botulinum (strain 657 / Type Ba4), this protein is ATP-dependent dethiobiotin synthetase BioD.